The sequence spans 169 residues: MAKGSGRAKAAGGKGGSKQIIATNRKARHNYSIIETYEAGVALQGTEVKSLREGQASLADAFATIDDGEVWLRNLYIPEYQHGSWTNHDPRRNRKLLLHRQQIDRLVGKIRDGNLALMPLSLYFSEGKVKVELALARGKKAYDKRQDLAQRDAQREVVRQLGRRTKGMI.

The protein belongs to the SmpB family.

It localises to the cytoplasm. In terms of biological role, required for rescue of stalled ribosomes mediated by trans-translation. Binds to transfer-messenger RNA (tmRNA), required for stable association of tmRNA with ribosomes. tmRNA and SmpB together mimic tRNA shape, replacing the anticodon stem-loop with SmpB. tmRNA is encoded by the ssrA gene; the 2 termini fold to resemble tRNA(Ala) and it encodes a 'tag peptide', a short internal open reading frame. During trans-translation Ala-aminoacylated tmRNA acts like a tRNA, entering the A-site of stalled ribosomes, displacing the stalled mRNA. The ribosome then switches to translate the ORF on the tmRNA; the nascent peptide is terminated with the 'tag peptide' encoded by the tmRNA and targeted for degradation. The ribosome is freed to recommence translation, which seems to be the essential function of trans-translation. The chain is SsrA-binding protein from Mycolicibacterium paratuberculosis (strain ATCC BAA-968 / K-10) (Mycobacterium paratuberculosis).